The chain runs to 711 residues: T-box transcription factor TBX2 (711 aa).

The T-box DNA-binding region spans 109 to 287 (LEAKELWDQF…NNPFAKGFRD (179 aa)). The tract at residues 313 to 449 (PERDGAESDA…GEGKEPSLAP (137 aa)) is disordered. A compositionally biased stretch (pro residues) spans 326–340 (DPPPAREPPPSPSAA). Phosphoserine occurs at positions 336, 342, and 360. Basic and acidic residues-rich tracts occupy residues 363–372 (EPERTGEERS), 390–409 (TEPE…KEPT), and 421–444 (SLEK…EGKE). Residues 518-602 (GSGSSGGAGP…ATSAAAAAAA (85 aa)) are repression domain 1 (RD1). Residues Ser-623, Ser-652, Ser-656, and Ser-675 each carry the phosphoserine modification. The segment at 640–687 (TGLAAEGSKGGNSREPSPLPELALRKVGGPSRGALSPSGSAKEAASEL) is disordered.

As to quaternary structure, binds DNA as a monomer. Interacts with CHD4, HDAC1 and HDAC2, perhaps as components of a NuRD-like complex. Interacts with CBX3, HMGB2 and PBX1. Interacts with PML. Post-translationally, phosphorylated. May be phosphorylated by p38 MAPK in response to UV irradiation stress. As to expression, in adults, highest levels in lung. Also found in heart, kidney, and ovary.

It localises to the nucleus. Its function is as follows. Transcription factor which acts as a transcriptional repressor. May also function as a transcriptional activator. Binds to the palindromic T site 5'-TTCACACCTAGGTGTGAA-3' DNA sequence, or a half-site, which are present in the regulatory region of several genes. Required for cardiac atrioventricular canal formation. May cooperate with NKX2.5 to negatively modulate expression of NPPA/ANF in the atrioventricular canal. May play a role as a positive regulator of TGFB2 expression, perhaps acting in concert with GATA4 in the developing outflow tract myocardium. Plays a role in limb pattern formation. Acts as a transcriptional repressor of ADAM10 gene expression, perhaps in concert with histone deacetylase HDAC1 as cofactor. Involved in branching morphogenesis in both developing lungs and adult mammary glands, via negative modulation of target genes; acting redundantly with TBX3. Required, together with TBX3, to maintain cell proliferation in the embryonic lung mesenchyme; perhaps acting downstream of SHH, BMP and TGFbeta signaling. Involved in modulating early inner ear development, acting independently of, and also redundantly with TBX3, in different subregions of the developing ear. Acts as a negative regulator of PML function in cellular senescence. Acts as a negative regulator of expression of CDKN1A/p21, IL33 and CCN4; repression of CDKN1A is enhanced in response to UV-induced stress, perhaps as a result of phosphorylation by p38 MAPK. Negatively modulates expression of CDKN2A/p19ARF and CDH1/E-cadherin. Plays a role in induction of the epithelial-mesenchymal transition (EMT). Plays a role in melanocyte proliferation, perhaps via regulation of cyclin CCND1. Involved in melanogenesis, acting via negative modulation of expression of DHICA oxidase/TYRP1 and P protein/OCA2. Involved in regulating retinal pigment epithelium (RPE) cell proliferation, perhaps via negatively modulating transcription of the transcription factor CEBPD. The chain is T-box transcription factor TBX2 (Tbx2) from Mus musculus (Mouse).